The primary structure comprises 396 residues: Elongation factor Tu (396 aa).

A tr-type G domain is found at 10–206 (KPHVNVGTIG…ALDTYIPLPE (197 aa)). Positions 19–26 (GHVDHGKT) are G1. A GTP-binding site is contributed by 19–26 (GHVDHGKT). Mg(2+) is bound at residue threonine 26. The tract at residues 60 to 64 (GITIN) is G2. Residues 81-84 (DCPG) form a G3 region. GTP contacts are provided by residues 81–85 (DCPGH) and 136–139 (NKCD). The tract at residues 136-139 (NKCD) is G4. Residues 174–176 (SAK) form a G5 region.

This sequence belongs to the TRAFAC class translation factor GTPase superfamily. Classic translation factor GTPase family. EF-Tu/EF-1A subfamily. As to quaternary structure, monomer.

The protein resides in the cytoplasm. The catalysed reaction is GTP + H2O = GDP + phosphate + H(+). GTP hydrolase that promotes the GTP-dependent binding of aminoacyl-tRNA to the A-site of ribosomes during protein biosynthesis. This chain is Elongation factor Tu, found in Polaromonas sp. (strain JS666 / ATCC BAA-500).